Reading from the N-terminus, the 190-residue chain is Xanthine phosphoribosyltransferase (190 aa).

Leu-20 and Asn-27 together coordinate xanthine. 127-131 serves as a coordination point for 5-phospho-alpha-D-ribose 1-diphosphate; sequence AYGNA. Lys-155 is a binding site for xanthine.

The protein belongs to the purine/pyrimidine phosphoribosyltransferase family. Xpt subfamily. As to quaternary structure, homodimer.

The protein resides in the cytoplasm. It carries out the reaction XMP + diphosphate = xanthine + 5-phospho-alpha-D-ribose 1-diphosphate. The protein operates within purine metabolism; XMP biosynthesis via salvage pathway; XMP from xanthine: step 1/1. Functionally, converts the preformed base xanthine, a product of nucleic acid breakdown, to xanthosine 5'-monophosphate (XMP), so it can be reused for RNA or DNA synthesis. The protein is Xanthine phosphoribosyltransferase of Bacteroides thetaiotaomicron (strain ATCC 29148 / DSM 2079 / JCM 5827 / CCUG 10774 / NCTC 10582 / VPI-5482 / E50).